A 213-amino-acid polypeptide reads, in one-letter code: Cytochrome b6 (213 aa).

Residues 30 to 50 (IFYCLGGLTLLAFLVQCVTGL) traverse the membrane as a helical segment. Residue cysteine 33 participates in heme c binding. 2 residues coordinate heme b: histidine 84 and histidine 98. The next 3 helical transmembrane spans lie at 88-108 (ANLMILLVFLHMLRVYYTGSF), 114-134 (LNWLAGCFLLVLSLGLAFTGY), and 184-204 (LHVMILPLVTIGFLVAHFIMI). Residues histidine 185 and histidine 200 each contribute to the heme b site.

This sequence belongs to the cytochrome b family. PetB subfamily. As to quaternary structure, the subunits of the cytochrome bc complex are a Rieske Fe-S protein (PetC), cytochrome b6 (PetB), subunit IV (PetD), and a diheme cytochrome c (PetX). It depends on heme b as a cofactor. The cofactor is heme c.

The protein resides in the cell membrane. In terms of biological role, component of the cytochrome bc complex which donates electrons to the photosynthetic reaction center. The chain is Cytochrome b6 from Heliobacterium mobile (Heliobacillus mobilis).